Consider the following 454-residue polypeptide: Protein odr-4 homolog (454 aa).

The next 2 membrane-spanning stretches (helical) occupy residues 82–102 and 432–452; these read MLPG…ELAN and IGVI…FHYF.

Belongs to the ODR-4 family. Ubiquitously expressed.

Its subcellular location is the membrane. Its function is as follows. May play a role in the trafficking of a subset of G-protein coupled receptors. The protein is Protein odr-4 homolog of Homo sapiens (Human).